Consider the following 185-residue polypeptide: Peptidyl-tRNA hydrolase (185 aa).

Y14 contacts tRNA. H19 (proton acceptor) is an active-site residue. Residues F64, N66, and N112 each coordinate tRNA.

It belongs to the PTH family. In terms of assembly, monomer.

The protein localises to the cytoplasm. It carries out the reaction an N-acyl-L-alpha-aminoacyl-tRNA + H2O = an N-acyl-L-amino acid + a tRNA + H(+). Hydrolyzes ribosome-free peptidyl-tRNAs (with 1 or more amino acids incorporated), which drop off the ribosome during protein synthesis, or as a result of ribosome stalling. In terms of biological role, catalyzes the release of premature peptidyl moieties from peptidyl-tRNA molecules trapped in stalled 50S ribosomal subunits, and thus maintains levels of free tRNAs and 50S ribosomes. This is Peptidyl-tRNA hydrolase from Latilactobacillus sakei subsp. sakei (strain 23K) (Lactobacillus sakei subsp. sakei).